The sequence spans 254 residues: Nodulation protein J (254 aa).

The next 6 helical transmembrane spans lie at 25 to 45 (ASVL…GVGL), 60 to 80 (FLAC…EMLY), 106 to 126 (LIGE…IVAV), 133 to 153 (YIPG…ALIF), 169 to 189 (LFAF…GVIV), and 230 to 250 (LLLS…VICV). The ABC transmembrane type-2 domain occupies 25–251 (ASVLGSVIDP…FISAKVICVR (227 aa)).

Belongs to the ABC-2 integral membrane protein family. Lipooligosaccharide exporter (TC 3.A.1.102) subfamily. The complex is composed of two ATP-binding proteins (NodI) and two transmembrane proteins (NodJ).

Its subcellular location is the cell inner membrane. Functionally, part of the ABC transporter complex NodIJ involved in the export of the nodulation factors (Nod factors), the bacterial signal molecules that induce symbiosis and subsequent nodulation induction. Nod factors are LCO (lipo-chitin oligosaccharide), a modified beta-1,4-linked N-acetylglucosamine oligosaccharide. This subunit encodes the transporter. The sequence is that of Nodulation protein J (nodJ) from Azorhizobium caulinodans (strain ATCC 43989 / DSM 5975 / JCM 20966 / LMG 6465 / NBRC 14845 / NCIMB 13405 / ORS 571).